The sequence spans 359 residues: 1-deoxy-D-xylulose 5-phosphate reductoisomerase (359 aa).

Residues Thr-12, Gly-13, Ser-14, Ile-15, Lys-38, and Asn-39 each contribute to the NADPH site. Lys-105 lines the 1-deoxy-D-xylulose 5-phosphate pocket. Glu-106 is an NADPH binding site. Asp-130 serves as a coordination point for Mn(2+). 4 residues coordinate 1-deoxy-D-xylulose 5-phosphate: Ser-131, Glu-132, Ser-152, and His-175. A Mn(2+)-binding site is contributed by Glu-132. Gly-181 contacts NADPH. 1-deoxy-D-xylulose 5-phosphate contacts are provided by Ser-188, Asn-193, Lys-194, and Glu-197. Glu-197 serves as a coordination point for Mn(2+).

The protein belongs to the DXR family. Mg(2+) is required as a cofactor. It depends on Mn(2+) as a cofactor.

It catalyses the reaction 2-C-methyl-D-erythritol 4-phosphate + NADP(+) = 1-deoxy-D-xylulose 5-phosphate + NADPH + H(+). It participates in isoprenoid biosynthesis; isopentenyl diphosphate biosynthesis via DXP pathway; isopentenyl diphosphate from 1-deoxy-D-xylulose 5-phosphate: step 1/6. Catalyzes the NADPH-dependent rearrangement and reduction of 1-deoxy-D-xylulose-5-phosphate (DXP) to 2-C-methyl-D-erythritol 4-phosphate (MEP). This chain is 1-deoxy-D-xylulose 5-phosphate reductoisomerase, found in Pseudothermotoga lettingae (strain ATCC BAA-301 / DSM 14385 / NBRC 107922 / TMO) (Thermotoga lettingae).